The following is a 642-amino-acid chain: Wall-associated receptor kinase-like 6 (642 aa).

The N-terminal stretch at 1-28 (MKKTKTYQVFCIAALSVLTLQLINGSSA) is a signal peptide. Over 29–357 (ATPPPPNSNS…PKITKPEKAS (329 aa)) the chain is Extracellular. Residues asparagine 37, asparagine 72, asparagine 95, asparagine 137, asparagine 216, asparagine 240, and asparagine 276 are each glycosylated (N-linked (GlcNAc...) asparagine). An atypical EGF-like region spans residues 289 to 346 (CSCEYDYFSGMSYRICYCNYGYTGNPYLRHGCIDIDECEGHHNCGEGTCVNMPGTHSC). 3 cysteine pairs are disulfide-bonded: cysteine 291–cysteine 304, cysteine 326–cysteine 337, and cysteine 332–cysteine 346. The helical transmembrane segment at 358-378 (VLQGVLISLGVLLFVLGILGL) threads the bilayer. At 379–642 (YKFIKKRTRI…KPLSRKRIGN (264 aa)) the chain is on the cytoplasmic side. Positions 432 to 642 (FSMNRVLGQG…KPLSRKRIGN (211 aa)) constitute a Protein kinase domain. Residues 438 to 446 (LGQGGQGTV) and lysine 460 each bind ATP. Tyrosine 505 carries the phosphotyrosine modification. Aspartate 559 (proton acceptor) is an active-site residue. Residues threonine 593 and threonine 598 each carry the phosphothreonine modification. Position 606 is a phosphotyrosine (tyrosine 606).

Belongs to the protein kinase superfamily. Ser/Thr protein kinase family. Slightly expressed in the whole plant.

It localises to the membrane. It catalyses the reaction L-seryl-[protein] + ATP = O-phospho-L-seryl-[protein] + ADP + H(+). It carries out the reaction L-threonyl-[protein] + ATP = O-phospho-L-threonyl-[protein] + ADP + H(+). Serine/threonine-protein kinase that may function as a signaling receptor of extracellular matrix component. This Arabidopsis thaliana (Mouse-ear cress) protein is Wall-associated receptor kinase-like 6 (WAKL6).